The following is an 81-amino-acid chain: Relaxin-like protein AGF (81 aa).

3 disulfide bridges follow: C14/C66, C26/C79, and C65/C70. A glycan (N-linked (GlcNAc...) asparagine) is linked at N37.

This sequence belongs to the insulin family. In terms of assembly, heterodimer of a B chain and an A chain linked by two disulfide bonds.

It localises to the secreted. In terms of biological role, uncertain. In Hypanus sabinus (Atlantic stingray), this protein is Relaxin-like protein AGF.